Here is a 476-residue protein sequence, read N- to C-terminus: WASH complex subunit 1 (476 aa).

A required for WASH complex assembly region spans residues 1-54 (MTTVAQKHFLEGQTYSVPLIQPDLRREEAVQQVADALQYLQKVSGDIFNRISQR). 2 disordered regions span residues 273-412 (SAPS…QGGD) and 427-476 (GISG…DWES). A compositionally biased stretch (polar residues) spans 284–296 (TFSTESVEPSQAD). The segment covering 302–333 (LLPPPPPPPPPPPPVMPTTVPPPPPLPQPTAP) has biased composition (pro residues). The segment at 354–476 (QGAPKEVVNP…GEEDEDDWES (123 aa)) is VCA. The region spanning 366–388 (GRASLLESIRQAGGIGKANLRSV) is the WH2 domain. The span at 387-403 (SVKERKLEKKKQKEQEQ) shows a compositional bias: basic and acidic residues. Acidic residues predominate over residues 467-476 (GEEDEDDWES).

Belongs to the WASH1 family. In terms of assembly, component of the WASH complex.

It is found in the early endosome membrane. The protein resides in the recycling endosome membrane. Its function is as follows. Acts as a nucleation-promoting factor at the surface of endosomes, where it recruits and activates the Arp2/3 complex to induce actin polymerization, playing a key role in the fission of tubules that serve as transport intermediates during endosome sorting. The polypeptide is WASH complex subunit 1 (Gallus gallus (Chicken)).